The following is a 177-amino-acid chain: MSRVAKAPVVIPAGVEVKLDGQVISIKGKNGELTRTLNNAVEVKHADNTLTFAPREGFADGWAQAGTSRALLNAMVIGVTEGFTKKLQLVGVGYRAAVKGNAVSLALGFSHPVEHALPAGITAECPTQTEIVLKGADKQLIGQVAADLRAYRRPEPYKGKGVRYADEVVRTKEAKKK.

It belongs to the universal ribosomal protein uL6 family. As to quaternary structure, part of the 50S ribosomal subunit.

This protein binds to the 23S rRNA, and is important in its secondary structure. It is located near the subunit interface in the base of the L7/L12 stalk, and near the tRNA binding site of the peptidyltransferase center. The protein is Large ribosomal subunit protein uL6 of Erwinia tasmaniensis (strain DSM 17950 / CFBP 7177 / CIP 109463 / NCPPB 4357 / Et1/99).